A 1373-amino-acid chain; its full sequence is Poly(A) RNA polymerase gld-2 homolog B (1373 aa).

A compositionally biased stretch (low complexity) spans 75-91 (NSCHSSNSSSNTSNNNN). Disordered stretches follow at residues 75-155 (NSCH…QEKQ), 175-340 (SDCK…FWKT), 425-543 (PDST…QQQK), 734-770 (PQQQ…FADG), 802-866 (CGSG…ALGS), and 880-928 (HPLH…PTPV). The segment covering 96 to 112 (GQQQQPLHYCNSNNSHS) has biased composition (polar residues). Composition is skewed to low complexity over residues 130-152 (QQQQ…QMQQ), 180-219 (SDSN…SCSN), 228-251 (NENS…NTSS), and 274-284 (ESGSSEGAAES). Polar residues-rich tracts occupy residues 295-340 (CNSN…FWKT) and 430-442 (KSSS…NMIR). The span at 443-485 (SSSNGNSNFSRHQYGHQSTGSGYQQQQQRYRNAQNVYQQYQHQ) shows a compositional bias: low complexity. A compositionally biased stretch (basic residues) spans 486–502 (QQHHAQQHTHPHFRRKH). Composition is skewed to low complexity over residues 735-753 (QQQQ…GTSS) and 819-844 (AGAL…SGTS). Positions 855-866 (PSISPTPSALGS) are enriched in polar residues. Residues 880–890 (HPLHQQHPPSH) show a composition bias toward low complexity. The segment at 945–1373 (RYLAQARNIE…FAETTAAHVA (429 aa)) is sufficent for interaction with Dcr-2. Residues aspartate 1029 and aspartate 1031 each coordinate Mg(2+). Residues 1211–1272 (TLGEHLLGFF…NIEEPFDLSN (62 aa)) enclose the PAP-associated domain. Low complexity predominate over residues 1320-1341 (LQQHQQQFEQQLHHPISGQQRS). Residues 1320–1359 (LQQHQQQFEQQLHHPISGQQRSAGGGGDGANPVPSTLNPD) form a disordered region.

This sequence belongs to the DNA polymerase type-B-like family. GLD2 subfamily. Interacts with orb, an RNA-binding protein, generating an ovarian cytoplasmic polyadenylation complex. Interacts (via C-terminus) with Dcr-2. The cofactor is Mg(2+). It depends on Mn(2+) as a cofactor. As to expression, expressed in ovaries. Not expressed in adult males.

Its subcellular location is the cytoplasm. The enzyme catalyses RNA(n) + ATP = RNA(n)-3'-adenine ribonucleotide + diphosphate. In terms of biological role, cytoplasmic poly(A) RNA polymerase that adds successive AMP monomers to the 3'-end of specific maternal RNAs (bcd, Tl, and tor), forming a poly(A) tail, during late oogenesis and early embryogenesis. In contrast to the canonical nuclear poly(A) RNA polymerase, it only adds poly(A) to selected cytoplasmic mRNAs. Required for localization of mRNAs to both poles of the egg, to recruit or maintain known centrosomal proteins with two types of microtubule organizing centers (MTOCs): the central MTOC that forms between the meiosis II tandem spindles and the centrosomes of the mitotic spindle. Required at the final stage of oogenesis for meiosis I metaphase arrest and for progression beyond this stage. Functions with the RNA-binding protein Dcr-2 to promote cytoplasmic polyadenylation and translational activation of certain mRNAs such as Tl and r2d2. As a consequence, is involved in regulating Toll immune signaling and promoting resistance to fungal infection. The polypeptide is Poly(A) RNA polymerase gld-2 homolog B (wisp) (Drosophila melanogaster (Fruit fly)).